A 488-amino-acid polypeptide reads, in one-letter code: DNA polymerase II small subunit (488 aa).

This sequence belongs to the DNA polymerase delta/II small subunit family. As to quaternary structure, heterodimer of a large subunit and a small subunit.

It carries out the reaction DNA(n) + a 2'-deoxyribonucleoside 5'-triphosphate = DNA(n+1) + diphosphate. It catalyses the reaction Exonucleolytic cleavage in the 3'- to 5'-direction to yield nucleoside 5'-phosphates.. Possesses two activities: a DNA synthesis (polymerase) and an exonucleolytic activity that degrades single-stranded DNA in the 3' to 5' direction. Has a template-primer preference which is characteristic of a replicative DNA polymerase. This chain is DNA polymerase II small subunit (polB), found in Thermoplasma acidophilum (strain ATCC 25905 / DSM 1728 / JCM 9062 / NBRC 15155 / AMRC-C165).